Here is a 468-residue protein sequence, read N- to C-terminus: Adenosylhomocysteinase (468 aa).

Thr-63, Asp-139, and Glu-164 together coordinate substrate. 165-167 (TTT) provides a ligand contact to NAD(+). Lys-194 and Asp-198 together coordinate substrate. NAD(+) is bound by residues Asn-199, 228–233 (GYGDVG), Glu-251, Asn-300, 321–323 (IGH), and Asn-374.

Belongs to the adenosylhomocysteinase family. It depends on NAD(+) as a cofactor.

It is found in the cytoplasm. The catalysed reaction is S-adenosyl-L-homocysteine + H2O = L-homocysteine + adenosine. It functions in the pathway amino-acid biosynthesis; L-homocysteine biosynthesis; L-homocysteine from S-adenosyl-L-homocysteine: step 1/1. Its function is as follows. May play a key role in the regulation of the intracellular concentration of adenosylhomocysteine. The sequence is that of Adenosylhomocysteinase from Stutzerimonas stutzeri (strain A1501) (Pseudomonas stutzeri).